We begin with the raw amino-acid sequence, 443 residues long: 3-phosphoshikimate 1-carboxyvinyltransferase (443 aa).

K24, S25, and R29 together coordinate 3-phosphoshikimate. K24 provides a ligand contact to phosphoenolpyruvate. 2 residues coordinate phosphoenolpyruvate: G96 and R124. The 3-phosphoshikimate site is built by S168, Q170, D316, and K343. Q170 lines the phosphoenolpyruvate pocket. D316 functions as the Proton acceptor in the catalytic mechanism. Positions 347 and 391 each coordinate phosphoenolpyruvate.

Belongs to the EPSP synthase family. As to quaternary structure, monomer.

The protein resides in the cytoplasm. It catalyses the reaction 3-phosphoshikimate + phosphoenolpyruvate = 5-O-(1-carboxyvinyl)-3-phosphoshikimate + phosphate. The protein operates within metabolic intermediate biosynthesis; chorismate biosynthesis; chorismate from D-erythrose 4-phosphate and phosphoenolpyruvate: step 6/7. Functionally, catalyzes the transfer of the enolpyruvyl moiety of phosphoenolpyruvate (PEP) to the 5-hydroxyl of shikimate-3-phosphate (S3P) to produce enolpyruvyl shikimate-3-phosphate and inorganic phosphate. The polypeptide is 3-phosphoshikimate 1-carboxyvinyltransferase (Dichelobacter nodosus (Bacteroides nodosus)).